The chain runs to 402 residues: 4-hydroxy-3-methylbut-2-enyl diphosphate reductase (402 aa).

Cysteine 66 provides a ligand contact to [4Fe-4S] cluster. A (2E)-4-hydroxy-3-methylbut-2-enyl diphosphate-binding site is contributed by histidine 96. Histidine 96 provides a ligand contact to dimethylallyl diphosphate. An isopentenyl diphosphate-binding site is contributed by histidine 96. Cysteine 157 contributes to the [4Fe-4S] cluster binding site. Residue histidine 185 participates in (2E)-4-hydroxy-3-methylbut-2-enyl diphosphate binding. Histidine 185 is a dimethylallyl diphosphate binding site. Histidine 185 provides a ligand contact to isopentenyl diphosphate. Residue glutamate 187 is the Proton donor of the active site. Threonine 250 is a binding site for (2E)-4-hydroxy-3-methylbut-2-enyl diphosphate. Cysteine 288 contacts [4Fe-4S] cluster. Serine 317, serine 318, asparagine 319, and serine 379 together coordinate (2E)-4-hydroxy-3-methylbut-2-enyl diphosphate. Serine 317, serine 318, asparagine 319, and serine 379 together coordinate dimethylallyl diphosphate. Isopentenyl diphosphate is bound by residues serine 317, serine 318, asparagine 319, and serine 379.

Belongs to the IspH family. Requires [4Fe-4S] cluster as cofactor.

The enzyme catalyses isopentenyl diphosphate + 2 oxidized [2Fe-2S]-[ferredoxin] + H2O = (2E)-4-hydroxy-3-methylbut-2-enyl diphosphate + 2 reduced [2Fe-2S]-[ferredoxin] + 2 H(+). It carries out the reaction dimethylallyl diphosphate + 2 oxidized [2Fe-2S]-[ferredoxin] + H2O = (2E)-4-hydroxy-3-methylbut-2-enyl diphosphate + 2 reduced [2Fe-2S]-[ferredoxin] + 2 H(+). The protein operates within isoprenoid biosynthesis; dimethylallyl diphosphate biosynthesis; dimethylallyl diphosphate from (2E)-4-hydroxy-3-methylbutenyl diphosphate: step 1/1. It functions in the pathway isoprenoid biosynthesis; isopentenyl diphosphate biosynthesis via DXP pathway; isopentenyl diphosphate from 1-deoxy-D-xylulose 5-phosphate: step 6/6. Catalyzes the conversion of 1-hydroxy-2-methyl-2-(E)-butenyl 4-diphosphate (HMBPP) into a mixture of isopentenyl diphosphate (IPP) and dimethylallyl diphosphate (DMAPP). Acts in the terminal step of the DOXP/MEP pathway for isoprenoid precursor biosynthesis. This Nostoc sp. (strain PCC 7120 / SAG 25.82 / UTEX 2576) protein is 4-hydroxy-3-methylbut-2-enyl diphosphate reductase.